A 301-amino-acid polypeptide reads, in one-letter code: Probable DNA-directed RNA polymerase III subunit rpc6 (301 aa).

It belongs to the eukaryotic RPC34/RPC39 RNA polymerase subunit family. As to quaternary structure, component of the RNA polymerase III (Pol III) complex consisting of 17 subunits. Interacts with TFIIB.

The protein localises to the nucleus. Its function is as follows. DNA-dependent RNA polymerase catalyzes the transcription of DNA into RNA using the four ribonucleoside triphosphates as substrates. Specific peripheric component of RNA polymerase III which synthesizes small RNAs, such as 5S rRNA and tRNAs. The chain is Probable DNA-directed RNA polymerase III subunit rpc6 (rpc6) from Schizosaccharomyces pombe (strain 972 / ATCC 24843) (Fission yeast).